The following is a 416-amino-acid chain: 4-hydroxy-3-methylbut-2-en-1-yl diphosphate synthase (flavodoxin) (416 aa).

[4Fe-4S] cluster contacts are provided by cysteine 304, cysteine 307, cysteine 350, and glutamate 357.

Belongs to the IspG family. The cofactor is [4Fe-4S] cluster.

It carries out the reaction (2E)-4-hydroxy-3-methylbut-2-enyl diphosphate + oxidized [flavodoxin] + H2O + 2 H(+) = 2-C-methyl-D-erythritol 2,4-cyclic diphosphate + reduced [flavodoxin]. It participates in isoprenoid biosynthesis; isopentenyl diphosphate biosynthesis via DXP pathway; isopentenyl diphosphate from 1-deoxy-D-xylulose 5-phosphate: step 5/6. Converts 2C-methyl-D-erythritol 2,4-cyclodiphosphate (ME-2,4cPP) into 1-hydroxy-2-methyl-2-(E)-butenyl 4-diphosphate. The chain is 4-hydroxy-3-methylbut-2-en-1-yl diphosphate synthase (flavodoxin) from Agrobacterium fabrum (strain C58 / ATCC 33970) (Agrobacterium tumefaciens (strain C58)).